A 1117-amino-acid chain; its full sequence is Reverse gyrase (1117 aa).

An RG N-terminal-type zinc finger spans residues 3-42 (LATGAKYYHSCINCGGINTDTRNEKGLPCEVCLPFEDGDV). Residues C13, C16, C31, and C34 each contribute to the Zn(2+) site. ATP contacts are provided by residues Q84 and 101–108 (APTGVGKT). The region spanning 88 to 284 (AKRLLLSKSF…LFRELLGFEI (197 aa)) is the Helicase ATP-binding domain. The short motif at 206–209 (DDVD) is the DEAD box element. The interval 551–1117 (KDMKSRMIIV…EELNEILIKN (567 aa)) is topoisomerase I. The Toprim domain maps to 555-712 (SRMIIVESPT…NVQRIEMHEI (158 aa)). A Mg(2+)-binding site is contributed by E561. Residues 631–658 (IKRCSSCGAQFTDELPRCPYCNSDKIDD) form an RG C-terminal-type zinc finger. Zn(2+) contacts are provided by C634, C637, C648, and C651. D681 contributes to the Mg(2+) binding site. Residues 728–1114 (DVNLVKSQIV…NLYEELNEIL (387 aa)) form the Topo IA-type catalytic domain. The O-(5'-phospho-DNA)-tyrosine intermediate role is filled by Y864.

This sequence in the N-terminal section; belongs to the DEAD box helicase family. DDVD subfamily. The protein in the C-terminal section; belongs to the type IA topoisomerase family. Monomer. Zn(2+) is required as a cofactor. Requires Mg(2+) as cofactor.

It is found in the cytoplasm. The enzyme catalyses ATP + H2O = ADP + phosphate + H(+). Modifies the topological state of DNA by introducing positive supercoils in an ATP-dependent process, increasing the linking number in steps of +1; also positively supercoils with dATP and ATP-gamma-S. With UTP or dTTP relaxes negatively supercoiled DNA, in the absence of any nucleotide partially relaxes negative supercoils. In the absence of nucleotide has a higher affinity for dsDNA with a single-stranded tail than dsDNA or ssDNA. Has an ATPase activity in the absence of DNA. Binds to single-stranded DNA, transiently cleaves and then rejoins the ends, introducing a positive supercoil in the process. The scissile phosphodiester is attacked by the catalytic tyrosine of the enzyme, resulting in the formation of a DNA-(5'-phosphotyrosyl)-enzyme intermediate. Probably involved in rewinding DNA strands in regions of the chromosome that have opened up to allow replication, transcription, DNA repair and/or for DNA protection. The polypeptide is Reverse gyrase (Caldanaerobacter subterraneus subsp. tengcongensis (strain DSM 15242 / JCM 11007 / NBRC 100824 / MB4) (Thermoanaerobacter tengcongensis)).